The sequence spans 419 residues: Probable pectate lyase C (419 aa).

An N-terminal signal peptide occupies residues 1-19 (MRLTPSLISCLSLLHFTSA). Residues asparagine 48, asparagine 164, and asparagine 201 are each glycosylated (N-linked (GlcNAc...) asparagine). The active site involves arginine 204. Positions 261–296 (NENFHAYVETNYYDSDKDGTLNGSELGVDSTNYGGM) constitute an EF-hand domain. Positions 274, 276, 278, and 280 each coordinate Ca(2+). Asparagine 282 is a glycosylation site (N-linked (GlcNAc...) asparagine). Glutamate 285 lines the Ca(2+) pocket. The interval 352–395 (ISDEADMGGAGDLDQGTTPTDTDGDGIPDDAEAELGTDPNTADS) is disordered. The segment covering 363-372 (DLDQGTTPTD) has biased composition (low complexity). Over residues 373 to 386 (TDGDGIPDDAEAEL) the composition is skewed to acidic residues.

It belongs to the polysaccharide lyase 1 family. Ca(2+) serves as cofactor.

It is found in the secreted. The enzyme catalyses Eliminative cleavage of (1-&gt;4)-alpha-D-galacturonan to give oligosaccharides with 4-deoxy-alpha-D-galact-4-enuronosyl groups at their non-reducing ends.. Its function is as follows. Pectinolytic enzyme consist of four classes of enzymes: pectin lyase, polygalacturonase, pectin methylesterase and rhamnogalacturonase. Among pectinolytic enzymes, pectin lyase is the most important in depolymerization of pectin, since it cleaves internal glycosidic bonds of highly methylated pectins. Favors pectate, the anion, over pectin, the methyl ester. This is Probable pectate lyase C (plyC) from Aspergillus oryzae (strain ATCC 42149 / RIB 40) (Yellow koji mold).